Reading from the N-terminus, the 484-residue chain is Glycogen synthase (484 aa).

Lysine 21 serves as a coordination point for ADP-alpha-D-glucose.

Belongs to the glycosyltransferase 1 family. Bacterial/plant glycogen synthase subfamily.

It carries out the reaction [(1-&gt;4)-alpha-D-glucosyl](n) + ADP-alpha-D-glucose = [(1-&gt;4)-alpha-D-glucosyl](n+1) + ADP + H(+). The protein operates within glycan biosynthesis; glycogen biosynthesis. Functionally, synthesizes alpha-1,4-glucan chains using ADP-glucose. This Pseudomonas syringae pv. tomato (strain ATCC BAA-871 / DC3000) protein is Glycogen synthase.